The primary structure comprises 161 residues: Cyclic pyranopterin monophosphate synthase (161 aa).

Substrate-binding positions include 75-77 (MCH) and 115-116 (ME). Asp-130 is a catalytic residue.

This sequence belongs to the MoaC family. As to quaternary structure, homohexamer; trimer of dimers.

The enzyme catalyses (8S)-3',8-cyclo-7,8-dihydroguanosine 5'-triphosphate = cyclic pyranopterin phosphate + diphosphate. It participates in cofactor biosynthesis; molybdopterin biosynthesis. Catalyzes the conversion of (8S)-3',8-cyclo-7,8-dihydroguanosine 5'-triphosphate to cyclic pyranopterin monophosphate (cPMP). The protein is Cyclic pyranopterin monophosphate synthase of Bacillus cereus (strain G9842).